The following is a 248-amino-acid chain: 14-3-3 protein sigma (248 aa).

Ser5, Ser74, and Ser248 each carry phosphoserine.

Belongs to the 14-3-3 family. Homodimer. Interacts with KRT17 and SAMSN1. Found in a complex with XPO7, EIF4A1, ARHGAP1, VPS26A, VPS29 and VPS35. Interacts with GAB2. Interacts with SRPK2. Interacts with COPS6. Interacts with COP1; this interaction leads to proteasomal degradation. Interacts with the 'Thr-369' phosphorylated form of DAPK2. Interacts with PI4KB. Interacts with SLITRK1. Interacts with LRRK2; this interaction is dependent on LRRK2 phosphorylation. Interacts with PKP3 (via N-terminus); the interaction maintains the cytoplasmic pool of PKP3, facilitates PKP3 exchange at desmosomes and restricts PKP3 localization to existing desmosome cell junctions. Interacts with LCP2. Ubiquitinated. Ubiquitination by RFFL induces proteasomal degradation and indirectly regulates p53/TP53 activation. Present mainly in tissues enriched in stratified squamous keratinizing epithelium.

Its subcellular location is the cytoplasm. It is found in the nucleus. It localises to the secreted. Its function is as follows. Adapter protein implicated in the regulation of a large spectrum of both general and specialized signaling pathways. Binds to a large number of partners, usually by recognition of a phosphoserine or phosphothreonine motif. Binding generally results in the modulation of the activity of the binding partner. Promotes cytosolic retention of GBP1 GTPase by binding to phosphorylated GBP1, thereby inhibiting the innate immune response. Also acts as a TP53/p53-regulated inhibitor of G2/M progression. When bound to KRT17, regulates protein synthesis and epithelial cell growth by stimulating Akt/mTOR pathway. Acts to maintain desmosome cell junction adhesion in epithelial cells via interacting with and sequestering PKP3 to the cytoplasm, thereby restricting its translocation to existing desmosome structures and therefore maintaining desmosome protein homeostasis. Also acts to facilitate PKP3 exchange at desmosome plaques, thereby maintaining keratinocyte intercellular adhesion. May also regulate MDM2 autoubiquitination and degradation and thereby activate p53/TP53. This Homo sapiens (Human) protein is 14-3-3 protein sigma (SFN).